The sequence spans 552 residues: Steroid transmembrane transporter SLC22A24 (552 aa).

A run of 12 helical transmembrane segments spans residues 16 to 36, 144 to 164, 175 to 197, 201 to 220, 232 to 252, 255 to 275, 349 to 369, 371 to 391, 407 to 427, 435 to 455, 474 to 494, and 496 to 516; these read FQIL…THIL, LKSV…LMFG, IYTW…PTFV, IFRF…AFIL, IGIT…GGLA, IRDW…LSLL, IICF…GLIL, LQDL…ITFI, INQS…TFLS, VVLA…FFVH, VFSR…VYSP, and LPWV…FCLP.

The protein belongs to the major facilitator (TC 2.A.1) superfamily. Organic cation transporter (TC 2.A.1.19) family.

It is found in the cell membrane. It catalyses the reaction estrone 3-sulfate(out) + glutarate(in) = estrone 3-sulfate(in) + glutarate(out). It carries out the reaction 17beta-estradiol 17-O-(beta-D-glucuronate)(out) + glutarate(in) = 17beta-estradiol 17-O-(beta-D-glucuronate)(in) + glutarate(out). The catalysed reaction is taurocholate(out) + glutarate(in) = taurocholate(in) + glutarate(out). The enzyme catalyses 5alpha-androstane-3alpha,17beta-diol 3-O-(beta-D-glucuronate)(out) + glutarate(in) = 5alpha-androstane-3alpha,17beta-diol 3-O-(beta-D-glucuronate)(in) + glutarate(out). It catalyses the reaction glycocholate(out) + glutarate(in) = glycocholate(in) + glutarate(out). It carries out the reaction dehydroepiandrosterone 3-sulfate(out) + glutarate(in) = dehydroepiandrosterone 3-sulfate(in) + glutarate(out). The catalysed reaction is glutarate(in) + succinate(out) = glutarate(out) + succinate(in). Renal transmembrane organic anion/dicarboxylate exchanger that participates in the reabsorption of conjugated steroids, as well as bile acids, driven by an outward gradient of dicarboxylates such as glutarate or succinate. Transports androstanediol glucuronide (5alpha-androstane-3alpha,17beta-diol 3-O-(beta-D-glucuronate)), estrone 3-sulfate, and estradiol-17-glucuronide (17beta-estradiol 17-O-(beta-D-glucuronate)), and taurocholate. This chain is Steroid transmembrane transporter SLC22A24, found in Oryctolagus cuniculus (Rabbit).